The chain runs to 441 residues: Platelet-activating factor acetylhydrolase (441 aa).

A signal peptide spans 1–21; sequence MVPPKLHVLFCLCGCLAVVYP. Serine 273 (nucleophile) is an active-site residue. Residues aspartate 296 and histidine 351 each act as charge relay system in the active site. 2 N-linked (GlcNAc...) asparagine glycosylation sites follow: asparagine 423 and asparagine 433.

The protein belongs to the AB hydrolase superfamily. Lipase family. In terms of processing, N-glycosylated. Macrophage-derived PLA2G7 carries sialylated complex-type N-glycans that hinder its binding to HDL particles. Plasma. Secreted by macrophages (at protein level).

It is found in the secreted. Its subcellular location is the extracellular space. It catalyses the reaction a 1-O-alkyl-2-acetyl-sn-glycero-3-phosphocholine + H2O = a 1-O-alkyl-sn-glycero-3-phosphocholine + acetate + H(+). The catalysed reaction is 1-O-decyl-2-acetyl-sn-glycero-3-phosphocholine + H2O = 1-O-decyl-sn-glycero-3-phosphocholine + acetate + H(+). It carries out the reaction 1-O-dodecyl-2-acetyl-sn-glycero-3-phosphocholine + H2O = 1-O-dodecyl-sn-glycero-3-phosphocholine + acetate + H(+). The enzyme catalyses 1-O-tetradecyl-2-acetyl-sn-glycero-3-phosphocholine + H2O = 1-O-tetradecyl-sn-glycero-3-phosphocholine + acetate + H(+). It catalyses the reaction 1-O-hexadecyl-2-acetyl-sn-glycero-3-phosphocholine + H2O = 1-O-hexadecyl-sn-glycero-3-phosphocholine + acetate + H(+). The catalysed reaction is 1-O-octadecyl-2-acetyl-sn-glycero-3-phosphocholine + H2O = 1-O-octadecyl-sn-glycero-3-phosphocholine + acetate + H(+). It carries out the reaction 1-hexadecanoyl-2-acetyl-sn-glycero-3-phosphocholine + H2O = 1-hexadecanoyl-sn-glycero-3-phosphocholine + acetate + H(+). The enzyme catalyses 1-hexadecanoyl-2-propionyl-sn-glycero-3-phosphocholine + H2O = propanoate + 1-hexadecanoyl-sn-glycero-3-phosphocholine + H(+). It catalyses the reaction 1-hexadecanoyl-2-butanoyl-sn-glycero-3-phosphocholine + H2O = butanoate + 1-hexadecanoyl-sn-glycero-3-phosphocholine + H(+). The catalysed reaction is 1-hexadecanoyl-2-pentanoyl-sn-glycero-3-phosphocholine + H2O = pentanoate + 1-hexadecanoyl-sn-glycero-3-phosphocholine + H(+). It carries out the reaction 1-hexadecanoyl-2-glutaroyl-sn-glycero-3-phosphocholine + H2O = glutarate + 1-hexadecanoyl-sn-glycero-3-phosphocholine + H(+). The enzyme catalyses 1-hexadecanoyl-2-(5-oxopentanoyl)-sn-glycero-3-phosphocholine + H2O = 5-oxopentanoate + 1-hexadecanoyl-sn-glycero-3-phosphocholine + H(+). It catalyses the reaction 1-hexadecanoyl-2-(9-oxononanoyl)-sn-glycero-3-phosphocholine + H2O = 9-oxononanoate + 1-hexadecanoyl-sn-glycero-3-phosphocholine + H(+). The catalysed reaction is 1-hexadecanoyl-2-[9-hydroperoxy-(10E-octadecenoyl)]-sn-glycero-3-phosphocholine + H2O = 9-hydroperoxy-10E-octadecenoate + 1-hexadecanoyl-sn-glycero-3-phosphocholine + H(+). It carries out the reaction 1-hexadecanoyl-2-(10-hydroperoxy-8E-octadecenoyl)-sn-glycero-3-phosphocholine + H2O = 10-hydroperoxy-(8E)-octadecenoate + 1-hexadecanoyl-sn-glycero-3-phosphocholine + H(+). In terms of biological role, lipoprotein-associated calcium-independent phospholipase A2 involved in phospholipid catabolism during inflammatory and oxidative stress response. At the lipid-aqueous interface, hydrolyzes the ester bond of fatty acyl group attached at sn-2 position of phospholipids (phospholipase A2 activity). Specifically targets phospholipids with a short-chain fatty acyl group at sn-2 position. Can hydrolyze phospholipids with long fatty acyl chains, only if they carry oxidized functional groups. Hydrolyzes and inactivates platelet-activating factor (PAF, 1-O-alkyl-2-acetyl-sn-glycero-3-phosphocholine), a potent pro-inflammatory signaling lipid that acts through PTAFR on various innate immune cells. Hydrolyzes oxidatively truncated phospholipids carrying an aldehyde group at omega position, preventing their accumulation in low-density lipoprotein (LDL) particles and uncontrolled pro-inflammatory effects. As part of high-density lipoprotein (HDL) particles, can hydrolyze phospholipids having long-chain fatty acyl hydroperoxides at sn-2 position and protect against potential accumulation of these oxylipins in the vascular wall. Catalyzes the release from membrane phospholipids of F2-isoprostanes, lipid biomarkers of cellular oxidative damage. This is Platelet-activating factor acetylhydrolase (PLA2G7) from Homo sapiens (Human).